A 214-amino-acid chain; its full sequence is MKIILLGAPGAGKGTQAQFITNKFGIPQISTGDMLRAAIKAGSELGQKAKILMDMGQLVPDDLIISLVKERVAQEDCEKGFLLDGFPRTIPQADALKSVGISIDYVLEFDVPDEVIVERMSGRRVHPASGRTYHIVYNPPKVEDKDDITGEDLILRADDKPETVLDRLKIYHNTTKLLVDYYQAEAAQGNTKYFRLDGTQKVEEVSQELDKILS.

10-15 (GAGKGT) is an ATP binding site. The segment at 30–59 (STGDMLRAAIKAGSELGQKAKILMDMGQLV) is NMP. Residues Thr31, Arg36, 57–59 (QLV), 85–88 (GFPR), and Gln92 contribute to the AMP site. An LID region spans residues 122 to 159 (GRRVHPASGRTYHIVYNPPKVEDKDDITGEDLILRADD). Residues Arg123 and 132–133 (TY) contribute to the ATP site. AMP is bound by residues Arg156 and Arg167. Gln200 is an ATP binding site.

This sequence belongs to the adenylate kinase family. In terms of assembly, monomer.

The protein localises to the cytoplasm. The enzyme catalyses AMP + ATP = 2 ADP. It functions in the pathway purine metabolism; AMP biosynthesis via salvage pathway; AMP from ADP: step 1/1. In terms of biological role, catalyzes the reversible transfer of the terminal phosphate group between ATP and AMP. Plays an important role in cellular energy homeostasis and in adenine nucleotide metabolism. The polypeptide is Adenylate kinase (Histophilus somni (strain 129Pt) (Haemophilus somnus)).